The primary structure comprises 366 residues: Chorismate synthase (366 aa).

Residues arginine 48 and arginine 54 each coordinate NADP(+). FMN-binding positions include 125-127, 238-239, glycine 278, 293-297, and arginine 319; these read RSS, NA, and KPTSS.

It belongs to the chorismate synthase family. As to quaternary structure, homotetramer. It depends on FMNH2 as a cofactor.

It carries out the reaction 5-O-(1-carboxyvinyl)-3-phosphoshikimate = chorismate + phosphate. Its pathway is metabolic intermediate biosynthesis; chorismate biosynthesis; chorismate from D-erythrose 4-phosphate and phosphoenolpyruvate: step 7/7. Catalyzes the anti-1,4-elimination of the C-3 phosphate and the C-6 proR hydrogen from 5-enolpyruvylshikimate-3-phosphate (EPSP) to yield chorismate, which is the branch point compound that serves as the starting substrate for the three terminal pathways of aromatic amino acid biosynthesis. This reaction introduces a second double bond into the aromatic ring system. This chain is Chorismate synthase, found in Burkholderia vietnamiensis (strain G4 / LMG 22486) (Burkholderia cepacia (strain R1808)).